The primary structure comprises 225 residues: Uridylate kinase (225 aa).

9 to 10 (GS) is an ATP binding site. Gly46 serves as a coordination point for UMP. ATP-binding residues include Gly47 and Arg51. Residues Asp67 and 115–121 (THPAHTT) each bind UMP. Residues Thr141, Asn142, Tyr147, and Asp150 each coordinate ATP.

It belongs to the UMP kinase family. Homohexamer.

The protein resides in the cytoplasm. It carries out the reaction UMP + ATP = UDP + ADP. The protein operates within pyrimidine metabolism; CTP biosynthesis via de novo pathway; UDP from UMP (UMPK route): step 1/1. Inhibited by UTP. Catalyzes the reversible phosphorylation of UMP to UDP. This Methanococcus aeolicus (strain ATCC BAA-1280 / DSM 17508 / OCM 812 / Nankai-3) protein is Uridylate kinase.